Here is a 165-residue protein sequence, read N- to C-terminus: Cyclic pyranopterin monophosphate synthase (165 aa).

Residues 76 to 78 and 114 to 115 each bind substrate; these read LCH and ME. Residue Asp-129 is part of the active site.

The protein belongs to the MoaC family. Homohexamer; trimer of dimers.

The catalysed reaction is (8S)-3',8-cyclo-7,8-dihydroguanosine 5'-triphosphate = cyclic pyranopterin phosphate + diphosphate. It functions in the pathway cofactor biosynthesis; molybdopterin biosynthesis. Functionally, catalyzes the conversion of (8S)-3',8-cyclo-7,8-dihydroguanosine 5'-triphosphate to cyclic pyranopterin monophosphate (cPMP). This Brucella abortus (strain 2308) protein is Cyclic pyranopterin monophosphate synthase.